The sequence spans 314 residues: Ribosomal RNA small subunit methyltransferase H (314 aa).

S-adenosyl-L-methionine contacts are provided by residues 35 to 37, D55, F79, D101, and Q108; that span reads GGH. The segment at 276 to 296 is disordered; sequence QGGQTLKPVGKKLMPSEAEVA.

This sequence belongs to the methyltransferase superfamily. RsmH family.

It is found in the cytoplasm. It catalyses the reaction cytidine(1402) in 16S rRNA + S-adenosyl-L-methionine = N(4)-methylcytidine(1402) in 16S rRNA + S-adenosyl-L-homocysteine + H(+). Its function is as follows. Specifically methylates the N4 position of cytidine in position 1402 (C1402) of 16S rRNA. This chain is Ribosomal RNA small subunit methyltransferase H, found in Pectobacterium atrosepticum (strain SCRI 1043 / ATCC BAA-672) (Erwinia carotovora subsp. atroseptica).